A 615-amino-acid polypeptide reads, in one-letter code: DNA mismatch repair protein MutL (615 aa).

The tract at residues 363–397 (FAEPAAREPVAPRYTPAPASGSRPAAPWPNAQPGY) is disordered. Positions 364–391 (AEPAAREPVAPRYTPAPASGSRPAAPWP) are enriched in low complexity.

It belongs to the DNA mismatch repair MutL/HexB family.

In terms of biological role, this protein is involved in the repair of mismatches in DNA. It is required for dam-dependent methyl-directed DNA mismatch repair. May act as a 'molecular matchmaker', a protein that promotes the formation of a stable complex between two or more DNA-binding proteins in an ATP-dependent manner without itself being part of a final effector complex. This is DNA mismatch repair protein MutL from Escherichia coli (strain K12 / MC4100 / BW2952).